Here is a 137-residue protein sequence, read N- to C-terminus: ATP synthase epsilon chain (137 aa).

This sequence belongs to the ATPase epsilon chain family. In terms of assembly, F-type ATPases have 2 components, CF(1) - the catalytic core - and CF(0) - the membrane proton channel. CF(1) has five subunits: alpha(3), beta(3), gamma(1), delta(1), epsilon(1). CF(0) has three main subunits: a, b and c.

The protein localises to the cell membrane. Its function is as follows. Produces ATP from ADP in the presence of a proton gradient across the membrane. The polypeptide is ATP synthase epsilon chain (Caldicellulosiruptor bescii (strain ATCC BAA-1888 / DSM 6725 / KCTC 15123 / Z-1320) (Anaerocellum thermophilum)).